An 874-amino-acid polypeptide reads, in one-letter code: MKTTAEIRQSFLDFFHSKGHQVVESSSLVPENDPTLLFTNAGMNQFKDVFLGMDKRPYSRATTAQRCVRPGGKHNDLENVGYTARHHTFFEMLGNFSFGDYFKQDAINFAWEYLTSPQWLGLPKEKLWVTVYETDDEAYNIWNKDVGVPAERIIRIGDNKGSPYASDNFWAMGDTGPCGPCTEIFYDHGDHIWGGPPGSPEEDGDRYIEIWNVVFMQFNRLADGTMEKLPRPSVDTGMGLERISAVLQHVNSNYEIDIFKTLIAKTAEIVGATDLTNKSLRVIADHIRSCAYLIADGVIPSNEGRGYVLRRIIRRAVRHGHLLGAKESFFYKLVPTLIDVMAEAGKDVKAKQTNVEKLLRLEEEQFARTLERGLSLLDEALSQVKDGILSGEVAFKLYDTYGFPLDLTADVCRERNITIDEQAFDRKMEAQRTRAQAASQFGVDYNSVIRVDGETKFEGYTEVESQAKITALFYDGKSVESIEAGQSAVVILENTPFYAESGGQIGDSGYLSTQSVTFNVKDTQKYGQVFGHIGELTQGSLKVGQSVNAIVDAKRRHNTSLNHSATHLLHAALRQILGLHVVQKGSLVSDKALRFDFAQPEAITKEQLSEIETLVNQKIRANFPVQTDIMDIDSAKAKGAMALFGEKYGDKVRVLTMGDFSIELCGGIHAKRTGDIGLFKIITENAVAAGIRRIEAVTGQNAIDWLHNQQRILTQSADLLKSDVNTLAEKIQQLQDKAKKVEKELQGLKEKAAMQAGSYFVKSAVKINGVSVIAQQLDGIETKSLRVMVDDLKNQLGSGVIAFASILDEKVNLVVGVTNDLTAKIKAGELVNLMAQQVGGKGGGRPDMAMAGGSQLENVTQAIKVAQDWLNKNL.

Zn(2+)-binding residues include His563, His567, Cys665, and His669.

This sequence belongs to the class-II aminoacyl-tRNA synthetase family. Zn(2+) serves as cofactor.

It localises to the cytoplasm. It carries out the reaction tRNA(Ala) + L-alanine + ATP = L-alanyl-tRNA(Ala) + AMP + diphosphate. Functionally, catalyzes the attachment of alanine to tRNA(Ala) in a two-step reaction: alanine is first activated by ATP to form Ala-AMP and then transferred to the acceptor end of tRNA(Ala). Also edits incorrectly charged Ser-tRNA(Ala) and Gly-tRNA(Ala) via its editing domain. The sequence is that of Alanine--tRNA ligase from Haemophilus influenzae (strain ATCC 51907 / DSM 11121 / KW20 / Rd).